The following is a 234-amino-acid chain: RNA-binding protein pno1 (234 aa).

Residues 1–39 (MPTQDSAAKQADDGFQLVQKKSRKRKMTMDMDDADPKAG) are disordered. The 50-residue stretch at 158-207 (LARCIGRLAGKGGRTKFTIENVTKTRIVLADSKVHILGSYQNIRAARTAL) folds into the KH domain.

This sequence belongs to the PNO1 family.

The protein localises to the nucleus. It localises to the nucleolus. The sequence is that of RNA-binding protein pno1 from Ixodes scapularis (Black-legged tick).